A 572-amino-acid polypeptide reads, in one-letter code: MRTSQYLFSTLKETPNDAQVVSHQLMLRAGMIRPMASGLYNWLPTGIRVLKKVEKIIREEMNKGGAIEVLMPVVQPAELWEESGRWEQYGPELLRFEDRGNRNFVLGPTHEEVITDLIRREVSSYKQLPLNLYQIQTKFRDEVRPRFGVMRSREFIMKDAYSFHTTQESLQETYDVMYQVYSNIFNRLGLDFRAVQADTGSIGGSASHEFQVLASSGEDDVVFSTESDFAANIELAEAVAIGERQAPTAEMTLVDTPNAKTINELVEQFNLPIEKTVKTLIVKGADENQPLVALIIRGDHELNEIKAQKHPLVADPLEFADEAEIKAKIGARVGSLGAVNLNIPAIIDRTVALMSDFSCGANIDGKHYFNVNWERDVAMPEVFDLRNVVEGDRSPDGKGTLQIKRGIEVGHIFQLGKKYSEAMKATVQGEDGKPLVMTMGCYGIGVTRVVASAIEQHHDDRGIIWPSDEIAPFTVAIVPMNMHKSESVQKYAEELYRTLQSQGVDVIFDDRKERPGVMFADMELIGVPHMVVIGEKNLDNGEIEYKNRRSGEKEMISKDKLLSVLNEKLGNL.

The protein belongs to the class-II aminoacyl-tRNA synthetase family. ProS type 1 subfamily. Homodimer.

The protein localises to the cytoplasm. It carries out the reaction tRNA(Pro) + L-proline + ATP = L-prolyl-tRNA(Pro) + AMP + diphosphate. Functionally, catalyzes the attachment of proline to tRNA(Pro) in a two-step reaction: proline is first activated by ATP to form Pro-AMP and then transferred to the acceptor end of tRNA(Pro). As ProRS can inadvertently accommodate and process non-cognate amino acids such as alanine and cysteine, to avoid such errors it has two additional distinct editing activities against alanine. One activity is designated as 'pretransfer' editing and involves the tRNA(Pro)-independent hydrolysis of activated Ala-AMP. The other activity is designated 'posttransfer' editing and involves deacylation of mischarged Ala-tRNA(Pro). The misacylated Cys-tRNA(Pro) is not edited by ProRS. The chain is Proline--tRNA ligase from Haemophilus influenzae (strain PittEE).